We begin with the raw amino-acid sequence, 375 residues long: Platelet-derived growth factor receptor-like protein (375 aa).

An N-terminal signal peptide occupies residues 1 to 21 (MKVWLLLGLLLVHEALEDVTG). Residues 22-64 (QHLPKNKRPKEPGENRIKPTNKKVKPKIPKMKDRDSANSAPKT) form a disordered region. The span at 40 to 50 (PTNKKVKPKIP) shows a compositional bias: basic residues. Residues 62-159 (PKTQSIMMQV…GYICRKDEAK (98 aa)) form the Ig-like C2-type 1 domain. Cys-96 and Cys-143 are disulfide-bonded. Residues Asn-132 and Asn-219 are each glycosylated (N-linked (GlcNAc...) asparagine). Positions 272–375 (PSTTILASSN…TTVATTVEFS (104 aa)) constitute an Ig-like C2-type 2 domain. An intrachain disulfide couples Cys-293 to Cys-357.

As to quaternary structure, forms a complex composed of PDGFRL, TNK2 and GRB2. In terms of tissue distribution, expressed in colon, lung and liver.

It is found in the secreted. In Homo sapiens (Human), this protein is Platelet-derived growth factor receptor-like protein (PDGFRL).